Here is a 152-residue protein sequence, read N- to C-terminus: Transcriptional regulator MraZ (152 aa).

SpoVT-AbrB domains lie at 5-52 (VTSI…PLHE) and 81-124 (ATEC…QDKQ).

The protein belongs to the MraZ family. Forms oligomers.

It is found in the cytoplasm. Its subcellular location is the nucleoid. The polypeptide is Transcriptional regulator MraZ (Actinobacillus pleuropneumoniae serotype 3 (strain JL03)).